A 371-amino-acid polypeptide reads, in one-letter code: Carnitine monooxygenase oxygenase subunit (371 aa).

Residues W44–I152 enclose the Rieske domain. 4 residues coordinate [2Fe-2S] cluster: C86, H88, C106, and H109. Residues H208, H213, and D323 each coordinate Fe cation.

This sequence belongs to the bacterial ring-hydroxylating dioxygenase alpha subunit family. CntA subfamily. In terms of assembly, composed of an oxygenase subunit (cntA) and a reductase subunit (cntB). Requires [2Fe-2S] cluster as cofactor. It depends on Fe cation as a cofactor.

The catalysed reaction is (R)-carnitine + NADH + O2 + H(+) = (3R)-3-hydroxy-4-oxobutanoate + trimethylamine + NAD(+) + H2O. The enzyme catalyses (R)-carnitine + NADPH + O2 + H(+) = (3R)-3-hydroxy-4-oxobutanoate + trimethylamine + NADP(+) + H2O. Its pathway is amine and polyamine metabolism; carnitine metabolism. Functionally, converts carnitine to trimethylamine and malic semialdehyde. The polypeptide is Carnitine monooxygenase oxygenase subunit (Acinetobacter baumannii (strain ATCC 19606 / DSM 30007 / JCM 6841 / CCUG 19606 / CIP 70.34 / NBRC 109757 / NCIMB 12457 / NCTC 12156 / 81)).